The following is a 93-amino-acid chain: Pyrimidine/purine nucleoside phosphorylase (93 aa).

It belongs to the nucleoside phosphorylase PpnP family.

The enzyme catalyses a purine D-ribonucleoside + phosphate = a purine nucleobase + alpha-D-ribose 1-phosphate. It carries out the reaction adenosine + phosphate = alpha-D-ribose 1-phosphate + adenine. The catalysed reaction is cytidine + phosphate = cytosine + alpha-D-ribose 1-phosphate. It catalyses the reaction guanosine + phosphate = alpha-D-ribose 1-phosphate + guanine. The enzyme catalyses inosine + phosphate = alpha-D-ribose 1-phosphate + hypoxanthine. It carries out the reaction thymidine + phosphate = 2-deoxy-alpha-D-ribose 1-phosphate + thymine. The catalysed reaction is uridine + phosphate = alpha-D-ribose 1-phosphate + uracil. It catalyses the reaction xanthosine + phosphate = alpha-D-ribose 1-phosphate + xanthine. Its function is as follows. Catalyzes the phosphorolysis of diverse nucleosides, yielding D-ribose 1-phosphate and the respective free bases. Can use uridine, adenosine, guanosine, cytidine, thymidine, inosine and xanthosine as substrates. Also catalyzes the reverse reactions. The chain is Pyrimidine/purine nucleoside phosphorylase from Sorangium cellulosum (strain So ce56) (Polyangium cellulosum (strain So ce56)).